Consider the following 89-residue polypeptide: MANTPQSKKRARQLERRTAVNKARRSRIRTFLRKVEEAIASGNAEIAREALNSAQPELMRGVTKGVIHKNTAARKMSRLSARVKALATA.

Positions 1 to 25 (MANTPQSKKRARQLERRTAVNKARR) are disordered.

It belongs to the bacterial ribosomal protein bS20 family.

Its function is as follows. Binds directly to 16S ribosomal RNA. The polypeptide is Small ribosomal subunit protein bS20 (Paracoccus denitrificans (strain Pd 1222)).